The sequence spans 269 residues: Protein LNK3 (269 aa).

In terms of assembly, interacts with REV8.

Probable transcriptional coactivator. The sequence is that of Protein LNK3 from Arabidopsis thaliana (Mouse-ear cress).